Consider the following 75-residue polypeptide: UPF0352 protein PMI0824 (75 aa).

This sequence belongs to the UPF0352 family.

The sequence is that of UPF0352 protein PMI0824 from Proteus mirabilis (strain HI4320).